The following is a 362-amino-acid chain: Porin Omp2b (362 aa).

An N-terminal signal peptide occupies residues 1 to 22 (MNIKSLLLGSAAALVAASGAQA).

The protein belongs to the alphaproteobacteria porin family. In terms of assembly, homotrimer.

The protein resides in the cell outer membrane. Forms passive diffusion pores that allow small molecular weight hydrophilic materials across the outer membrane. The polypeptide is Porin Omp2b (omp2b) (Brucella neotomae).